The following is a 764-amino-acid chain: 5-methyltetrahydropteroyltriglutamate--homocysteine methyltransferase (764 aa).

5-methyltetrahydropteroyltri-L-glutamate contacts are provided by residues 17 to 20 and Lys117; that span reads RELK. L-homocysteine contacts are provided by residues 436 to 438 and Glu489; that span reads IGS. Residues 436–438 and Glu489 contribute to the L-methionine site; that span reads IGS. 5-methyltetrahydropteroyltri-L-glutamate contacts are provided by residues 520 to 521 and Trp566; that span reads RC. An L-homocysteine-binding site is contributed by Asp604. Asp604 lines the L-methionine pocket. Glu610 is a binding site for 5-methyltetrahydropteroyltri-L-glutamate. Zn(2+) contacts are provided by His646, Cys648, and Glu670. The Proton donor role is filled by His699. Cys731 serves as a coordination point for Zn(2+).

Belongs to the vitamin-B12 independent methionine synthase family. Zn(2+) is required as a cofactor.

The catalysed reaction is 5-methyltetrahydropteroyltri-L-glutamate + L-homocysteine = tetrahydropteroyltri-L-glutamate + L-methionine. It participates in amino-acid biosynthesis; L-methionine biosynthesis via de novo pathway; L-methionine from L-homocysteine (MetE route): step 1/1. In terms of biological role, catalyzes the transfer of a methyl group from 5-methyltetrahydrofolate to homocysteine resulting in methionine formation. This chain is 5-methyltetrahydropteroyltriglutamate--homocysteine methyltransferase, found in Baumannia cicadellinicola subsp. Homalodisca coagulata.